Consider the following 727-residue polypeptide: MMTNGVVHANLFGIKDWVTPYKIAVLVLLNEMGRTGEGAVSLVERRKLNQLLLPLLQGPDITLSKLYKLIEESCPQLANSVQIRIKLMAEGELKDLEQFFDDLSDSFSGTEPEVHKTSVVGLFLRHMILAYSKLSFSQVFKLYTALQQYFQNGEKKTVEDADMDREDGERQMEKEELDVSVREEEVSCSGPLSQKQAEFFLSQQAALLKNDETKALTPASLQKELNNLLKFNPDFAEAHYLSYLNNLRVQDVFSSTHSLLHYFDRLILTGAEGKSNGEEGYGRSLRYAALNLAALHCRFGHYQQAELALQEAIRIAQESNDHVCLQHCLSWLYVLGQKRADSYVLLEHSVKKAVHFGLPRAFAGKTANKLMDALKDSDLLHWKHSLSELIDISIAQKTAIWRLYGRSTMALQQAQMLLSMNSLESLSAGVQQNNTESFAVALCHLAELHAEQGCFAAAGEVLKHLKERFPPNSQHAQLWMLCDQKIQFDRAMNDGKFHLADSLVTGITALNGIEGVYRKAVVLQAQNQMTEAHKLLQKLLTYCQKLKNTEMVISVLLSVAELYWRSSSPTIAMPVLLEALALSKEYRLQYLASETVLNLAYAQLILGIPEQALTLLHMAIEPILADGAILDKGRAMFLVSKCQVASAASYDPVKKAEALEAAIQNLTEAKNYFAKVDCRERIRDVSYFQARLYHALGKTQERNHCAMVFRQLHQELPSHGVPLINHL.

Phosphoserine is present on Ser-180. TPR repeat units lie at residues 194-234 (QKQA…FNPD), 235-285 (FAEA…GRSL), 286-322 (RYAALNLAALHCRFGHYQQAELALQEAIRIAQESNDH), 323-359 (VCLQHCLSWLYVLGQKRADSYVLLEHSVKKAVHFGLP), 360-390 (RAFAGKTANKLMDALKDSDLLHWKHSLSELI), 391-438 (DISI…TESF), 439-472 (AVALCHLAELHAEQGCFAAAGEVLKHLKERFPPN), 473-512 (SQHAQLWMLCDQKIQFDRAMNDGKFHLADSLVTGITALNG), 513-552 (IEGVYRKAVVLQAQNQMTEAHKLLQKLLTYCQKLKNTEMV), 553-592 (ISVLLSVAELYWRSSSPTIAMPVLLEALALSKEYRLQYLA), 593-632 (SETVLNLAYAQLILGIPEQALTLLHMAIEPILADGAILDK), 633-668 (GRAMFLVSKCQVASAASYDPVKKAEALEAAIQNLTE), and 669-708 (AKNYFAKVDCRERIRDVSYFQARLYHALGKTQERNHCAMV). Thr-217 carries the phosphothreonine modification.

It belongs to the APC5 family. The mammalian APC/C is composed at least of 14 distinct subunits ANAPC1, ANAPC2, CDC27/APC3, ANAPC4, ANAPC5, CDC16/APC6, ANAPC7, CDC23/APC8, ANAPC10, ANAPC11, CDC26/APC12, ANAPC13, ANAPC15 and ANAPC16 that assemble into a complex of at least 19 chains with a combined molecular mass of around 1.2 MDa; APC/C interacts with FZR1 and FBXO5.

The protein resides in the nucleus. It is found in the cytoplasm. Its subcellular location is the cytoskeleton. It localises to the spindle. The protein operates within protein modification; protein ubiquitination. Its function is as follows. Component of the anaphase promoting complex/cyclosome (APC/C), a cell cycle-regulated E3 ubiquitin ligase that controls progression through mitosis and the G1 phase of the cell cycle. The APC/C complex acts by mediating ubiquitination and subsequent degradation of target proteins: it mainly mediates the formation of 'Lys-11'-linked polyubiquitin chains and, to a lower extent, the formation of 'Lys-48'- and 'Lys-63'-linked polyubiquitin chains. The APC/C complex catalyzes assembly of branched 'Lys-11'-/'Lys-48'-linked branched ubiquitin chains on target proteins. The polypeptide is Anaphase-promoting complex subunit 5 (Anapc5) (Rattus norvegicus (Rat)).